A 243-amino-acid chain; its full sequence is ATP synthase subunit a, chloroplastic (243 aa).

5 helical membrane passes run 32–52, 96–116, 129–149, 195–215, and 216–236; these read GQVLLVSWFVLAVIFGLSFVG, TVFLFIFVSNWSGALLPWALI, DINTTVALALLTSISYFYAGI, LVVGVLVSLVPLIIPIPIMLL, and GCFTSAIQALVFATLAGAYIG.

The protein belongs to the ATPase A chain family. As to quaternary structure, F-type ATPases have 2 components, CF(1) - the catalytic core - and CF(0) - the membrane proton channel. CF(1) has five subunits: alpha(3), beta(3), gamma(1), delta(1), epsilon(1). CF(0) has four main subunits: a, b, b' and c.

The protein localises to the plastid. It is found in the chloroplast thylakoid membrane. Its function is as follows. Key component of the proton channel; it plays a direct role in the translocation of protons across the membrane. This chain is ATP synthase subunit a, chloroplastic, found in Tetradesmus obliquus (Green alga).